The following is a 124-amino-acid chain: Large ribosomal subunit protein bL12 (124 aa).

The protein belongs to the bacterial ribosomal protein bL12 family. As to quaternary structure, homodimer. Part of the ribosomal stalk of the 50S ribosomal subunit. Forms a multimeric L10(L12)X complex, where L10 forms an elongated spine to which 2 to 4 L12 dimers bind in a sequential fashion. Binds GTP-bound translation factors.

In terms of biological role, forms part of the ribosomal stalk which helps the ribosome interact with GTP-bound translation factors. Is thus essential for accurate translation. The chain is Large ribosomal subunit protein bL12 from Borreliella burgdorferi (strain ZS7) (Borrelia burgdorferi).